A 501-amino-acid chain; its full sequence is MAINAQEISALIKKQIENFQPNFDVTETGVVTYIGDGIARACGLDNAMSGELLEFDNGTFGMAQNLESSDIGIIILGDFNSIREGDTVKRTGKIMEVPVGQSLIGRVVNPLGQPVDGLGEIETTATRPVEAAAPGVMQRQSVSEPLQTGIKAIDALVPIGRGQRELVIGDRQTGKTSIAIDAIINQKGQDMICIYVAIGQKESTVRSQVEVLRKYGALDYTIVVTASASQPSPLLYIAPYAGVAMAEEFMYNGKHALIVYDDLSKQAVAYRELSLLLRRPPGREAYPGDVFYLHSRLLERSAKLSDELGGGSITALPFIETQAGDISAYIATNVISITDGQIFLQENLFNSGIRPAIDAGSSVSRVGGSAQIKAMKKVAGTLRLDLASYRELEAFTQFGSDLDSATQAKLNRGRRTVEVLKQGLHKPLAVEKQVLILYALTHGFLDSVPVDDILTFQDDMFDYIDSHDADIFETIRTTKDLPEEAVLDKAIQTFKDQSQFS.

Position 169 to 176 (169 to 176 (GDRQTGKT)) interacts with ATP.

This sequence belongs to the ATPase alpha/beta chains family. In terms of assembly, F-type ATPases have 2 components, CF(1) - the catalytic core - and CF(0) - the membrane proton channel. CF(1) has five subunits: alpha(3), beta(3), gamma(1), delta(1), epsilon(1). CF(0) has three main subunits: a(1), b(2) and c(9-12). The alpha and beta chains form an alternating ring which encloses part of the gamma chain. CF(1) is attached to CF(0) by a central stalk formed by the gamma and epsilon chains, while a peripheral stalk is formed by the delta and b chains.

It localises to the cell membrane. It catalyses the reaction ATP + H2O + 4 H(+)(in) = ADP + phosphate + 5 H(+)(out). Its function is as follows. Produces ATP from ADP in the presence of a proton gradient across the membrane. The alpha chain is a regulatory subunit. In Streptococcus mutans serotype c (strain ATCC 700610 / UA159), this protein is ATP synthase subunit alpha.